The sequence spans 337 residues: DNA-directed RNA polymerase subunit alpha (337 aa).

An alpha N-terminal domain (alpha-NTD) region spans residues 1 to 232; it reads MVREEVRVCT…IDLFIPFLHA (232 aa). The interval 266-337 is alpha C-terminal domain (alpha-CTD); sequence EISFQCIFID…FAIDLPKNKF (72 aa).

This sequence belongs to the RNA polymerase alpha chain family. As to quaternary structure, in plastids the minimal PEP RNA polymerase catalytic core is composed of four subunits: alpha, beta, beta', and beta''. When a (nuclear-encoded) sigma factor is associated with the core the holoenzyme is formed, which can initiate transcription.

Its subcellular location is the plastid. The protein resides in the chloroplast. It carries out the reaction RNA(n) + a ribonucleoside 5'-triphosphate = RNA(n+1) + diphosphate. Functionally, DNA-dependent RNA polymerase catalyzes the transcription of DNA into RNA using the four ribonucleoside triphosphates as substrates. The polypeptide is DNA-directed RNA polymerase subunit alpha (Buxus microphylla (Littleleaf boxwood)).